We begin with the raw amino-acid sequence, 238 residues long: uncharacterized protein (238 aa).

A run of 3 helical transmembrane segments spans residues 75-95 (YAIF…HNFY), 116-136 (IVLI…FSLI), and 172-192 (IQGL…LEVI). The disordered stretch occupies residues 200 to 238 (DVEMSSMRGQAITTEPASDNTMAEETDCNTSKDVESGSN). Positions 206–220 (MRGQAITTEPASDNT) are enriched in polar residues. The segment covering 229–238 (TSKDVESGSN) has biased composition (basic and acidic residues).

The protein localises to the membrane. This is an uncharacterized protein from Schizosaccharomyces pombe (strain 972 / ATCC 24843) (Fission yeast).